The chain runs to 141 residues: Hemoglobin subunit alpha-D (141 aa).

The 141-residue stretch at 1-141 (MLTAEDKKLI…VAAVLAGKYR (141 aa)) folds into the Globin domain. H58 and H87 together coordinate heme b.

Belongs to the globin family. As to quaternary structure, heterotetramer of two alpha-D chains and two beta chains. In terms of tissue distribution, red blood cells.

Its function is as follows. Involved in oxygen transport from the lung to the various peripheral tissues. This chain is Hemoglobin subunit alpha-D (HBAD), found in Coturnix japonica (Japanese quail).